The following is a 436-amino-acid chain: Amino acid transporter AVT3C (436 aa).

Residues 1-13 (MGFQNEASSSSYT) are compositionally biased toward polar residues. A disordered region spans residues 1–21 (MGFQNEASSSSYTLKIPPPAR). Topologically, residues 1–38 (MGFQNEASSSSYTLKIPPPAREDSPLLGKGPPLSSQFK) are cytoplasmic. The helical transmembrane segment at 39-59 (TFANVFIAVVGAGVLGLPYAF) threads the bilayer. Over 60–65 (KRTGWL) the chain is Vacuolar. Residues 66-86 (MGVLLLVSVSVLTHHCMMLLV) form a helical membrane-spanning segment. At 87–118 (YTRRKLDSFNAGISKIGSFGDLGFAVCGSLGR) the chain is on the cytoplasmic side. A helical transmembrane segment spans residues 119–139 (IVVDLFIILSQAGFCVGYLIF). At 140–166 (IGTTLANLSDPESPTSLRHQFTRLGSE) the chain is on the vacuolar side. The chain crosses the membrane as a helical span at residues 167-187 (FLGVSSKSLYIWGCFPFQLGL). The Cytoplasmic segment spans residues 188-195 (NSIKTLTH). The helical transmembrane segment at 196 to 216 (LAPLSIFADIVDLGAMAVVIV) threads the bilayer. The Vacuolar portion of the chain corresponds to 217-228 (EDSMIILKQRPD). A helical transmembrane segment spans residues 229 to 249 (VVAFGGMSLFLYGMGVAVYSF). Over 250–273 (EGVGMVLPLESEMKDKDKFGKVLA) the chain is Cytoplasmic. A helical transmembrane segment spans residues 274 to 294 (LGMGFISLIYIAFGILGYLAF). Topologically, residues 295-309 (GEDTMDIITANLGAG) are vacuolar. A helical transmembrane segment spans residues 310-330 (LVSTVVQLGLCINLFFTFPLM). The Cytoplasmic segment spans residues 331–352 (MNPVFEIVERRFSRGMYSAWLR). A helical transmembrane segment spans residues 353-373 (WVLVLAVTLVALFVPNFADFL). Topologically, residues 374–376 (SLV) are vacuolar. The helical transmembrane segment at 377 to 397 (GSSTCCVLGFVLPALFHLLVF) threads the bilayer. Topologically, residues 398–411 (KEEMGWLQWSSDTA) are cytoplasmic. The chain crosses the membrane as a helical span at residues 412 to 432 (IVVLGVVLAVSGTWSSLSEIF). The Vacuolar segment spans residues 433-436 (SVKV).

The protein belongs to the amino acid/polyamine transporter 2 family. Amino acid/auxin permease (AAAP) (TC 2.A.18.8) subfamily. Ubiquitous.

It localises to the vacuole membrane. Its function is as follows. Translocates preferentially neutral amino acids from the vacuole to the cytoplasm. The chain is Amino acid transporter AVT3C from Arabidopsis thaliana (Mouse-ear cress).